The chain runs to 455 residues: F-box/FBD/LRR-repeat protein At3g51530 (455 aa).

A disordered region spans residues 1–26 (MKNSERFSAAKPLMEQGGKSSRKPGF). One can recognise an F-box domain in the interval 29-75 (EDRISELPEVLLLQILSSLPTKLVISTSVLSKRWLSLWKMVQRLEFE). 6 LRR repeats span residues 80–106 (IYDF…HLKV), 155–182 (ETLK…HLLS), 183–208 (VVYK…VLRR), 227–257 (TLLL…GIES), 277–302 (IRNV…SLDL), and 325–351 (THKV…KLID). The FBD domain occupies 370 to 417 (KWNQPKYVPECLETFMWRNCNWGREEEKEVATYILRNARQLKKATFST).

The protein is F-box/FBD/LRR-repeat protein At3g51530 of Arabidopsis thaliana (Mouse-ear cress).